The chain runs to 391 residues: 2-deoxy-scyllo-inosose synthase (391 aa).

NAD(+)-binding positions include Asp42, 73–76, 105–109, 129–130, 140–142, and 151–152; these read EVHK, GVTGN, TT, SLK, and KN. Lys142 is an active-site residue. Glu184 serves as a coordination point for Co(2+). Glu244 is an active-site residue. Residues His247 and His263 each coordinate Co(2+).

It belongs to the sugar phosphate cyclases superfamily. DOI synthase family. Requires NAD(+) as cofactor. Co(2+) serves as cofactor.

It carries out the reaction D-glucose 6-phosphate = 2-deoxy-L-scyllo-inosose + phosphate. It functions in the pathway metabolic intermediate biosynthesis; 2-deoxystreptamine biosynthesis; 2-deoxystreptamine from D-glucose 6-phosphate: step 1/4. It participates in antibiotic biosynthesis; ribostamycin biosynthesis. Its function is as follows. Catalyzes the intramolecular carbocycle formation from D-glucose-6-phosphate to 2-deoxy-scyllo-inosose (DOI). The protein is 2-deoxy-scyllo-inosose synthase (rbmA) of Streptomyces ribosidificus.